Reading from the N-terminus, the 304-residue chain is Ubiquitin thioesterase OTU1 (304 aa).

Residues 5-83 (RCKTREGTQL…IVEEDKSKLR (79 aa)) are UBX-like. Residues 105–230 (IVRRVVPADN…GIHYDPLQRQ (126 aa)) form the OTU domain. Positions 110-116 (VPADNSC) are cys-loop. Asp-113 is a catalytic residue. Cys-116 functions as the Nucleophile in the catalytic mechanism. A variable-loop region spans residues 169-179 (IRREDTWGGAI). The interval 219–223 (YDGIH) is his-loop. Substrate is bound at residue Ile-222. The active site involves His-223. Positions 247 to 252 (DEALVQ) are S2 site. The segment at 274-298 (LRCMACQKGLTGQSAARDHAKETGH) adopts a C2H2-type zinc-finger fold. His-298 is a catalytic residue.

It localises to the cytoplasm. The catalysed reaction is Thiol-dependent hydrolysis of ester, thioester, amide, peptide and isopeptide bonds formed by the C-terminal Gly of ubiquitin (a 76-residue protein attached to proteins as an intracellular targeting signal).. Functionally, hydrolase that can remove conjugated ubiquitin from proteins and participates in endoplasmic reticulum-associated degradation (ERAD) for misfolded lumenal proteins. May act by triming the ubiquitin chain on the associated substrate to facilitate their threading through the VCP/p97 pore. Ubiquitin moieties on substrates may present a steric impediment to the threading process when the substrate is transferred to the VCP pore and threaded through VCP's axial channel. Mediates deubiquitination of 'Lys-27'-, 'Lys-29'- and 'Lys-33'-linked polyubiquitin chains. Also able to hydrolyze 'Lys-11'-linked ubiquitin chains. Cleaves both polyubiquitin and di-ubiquitin. This chain is Ubiquitin thioesterase OTU1 (yod1), found in Xenopus laevis (African clawed frog).